Consider the following 304-residue polypeptide: Phosphatidylserine decarboxylase proenzyme (304 aa).

Residues Asp-90, His-147, and Ser-253 each act as charge relay system; for autoendoproteolytic cleavage activity in the active site. Ser-253 serves as the catalytic Schiff-base intermediate with substrate; via pyruvic acid; for decarboxylase activity. The residue at position 253 (Ser-253) is a Pyruvic acid (Ser); by autocatalysis.

This sequence belongs to the phosphatidylserine decarboxylase family. PSD-B subfamily. Prokaryotic type I sub-subfamily. As to quaternary structure, heterodimer of a large membrane-associated beta subunit and a small pyruvoyl-containing alpha subunit. Requires pyruvate as cofactor. Post-translationally, is synthesized initially as an inactive proenzyme. Formation of the active enzyme involves a self-maturation process in which the active site pyruvoyl group is generated from an internal serine residue via an autocatalytic post-translational modification. Two non-identical subunits are generated from the proenzyme in this reaction, and the pyruvate is formed at the N-terminus of the alpha chain, which is derived from the carboxyl end of the proenzyme. The autoendoproteolytic cleavage occurs by a canonical serine protease mechanism, in which the side chain hydroxyl group of the serine supplies its oxygen atom to form the C-terminus of the beta chain, while the remainder of the serine residue undergoes an oxidative deamination to produce ammonia and the pyruvoyl prosthetic group on the alpha chain. During this reaction, the Ser that is part of the protease active site of the proenzyme becomes the pyruvoyl prosthetic group, which constitutes an essential element of the active site of the mature decarboxylase.

The protein localises to the cell membrane. It catalyses the reaction a 1,2-diacyl-sn-glycero-3-phospho-L-serine + H(+) = a 1,2-diacyl-sn-glycero-3-phosphoethanolamine + CO2. It participates in phospholipid metabolism; phosphatidylethanolamine biosynthesis; phosphatidylethanolamine from CDP-diacylglycerol: step 2/2. Functionally, catalyzes the formation of phosphatidylethanolamine (PtdEtn) from phosphatidylserine (PtdSer). The chain is Phosphatidylserine decarboxylase proenzyme from Dickeya dadantii (strain 3937) (Erwinia chrysanthemi (strain 3937)).